The primary structure comprises 225 residues: Histone H1.5 (225 aa).

Positions 1–23 are disordered; the sequence is MSDVAVAETPAVKTPTKASKATK. The residue at position 2 (serine 2) is an N-acetylserine. A compositionally biased stretch (low complexity) spans 9–19; the sequence is TPAVKTPTKAS. Residues 37–113 form the H15 domain; sequence AHPPFINMIT…GANGRFRLAV (77 aa). Over residues 145–156 the composition is skewed to basic and acidic residues; it reads KKTVAKKTGDKV. The disordered stretch occupies residues 145–225; the sequence is KKTVAKKTGD…RKAVGTAPKA (81 aa). Positions 157-175 are enriched in basic residues; sequence KKVKSPKRIAKPAVKKVTK. The span at 176-208 shows a compositional bias: low complexity; sequence KAAAPTKSAANETAPKKAAATEAAPKKAAVTKA.

This sequence belongs to the histone H1/H5 family.

It is found in the nucleus. Its subcellular location is the chromosome. In terms of biological role, histones H1 are necessary for the condensation of nucleosome chains into higher-order structures. The sequence is that of Histone H1.5 (hil-5) from Caenorhabditis elegans.